The following is a 466-amino-acid chain: UDP-glycosyltransferase 91B1 (466 aa).

UDP-alpha-D-glucose-binding positions include T286, 342–344 (VPQ), 359–367 (HCGWGSAVE), and 381–384 (NLDQ).

This sequence belongs to the UDP-glycosyltransferase family.

This Arabidopsis thaliana (Mouse-ear cress) protein is UDP-glycosyltransferase 91B1 (UGT91B1).